Reading from the N-terminus, the 526-residue chain is Cytochrome P450 monooxygenase 226 (526 aa).

A helical membrane pass occupies residues 15-35 (FATSYAALTVAAVTLLAALLV). N219, N277, and N320 each carry an N-linked (GlcNAc...) asparagine glycan. A heme-binding site is contributed by C452.

It belongs to the cytochrome P450 family. Heme serves as cofactor.

Its subcellular location is the membrane. It participates in secondary metabolite biosynthesis. Cytochrome P450 monooxygenase that is able to use anthracene, carbazole and phenanthrene as substrates for oxidation. These multifunctional properties against a series of polycyclic aromatic hydrocarbons (PAHs) suggest that CYP226 would play important roles, at least in part, in fungal metabolic systems involved in xenobiotic detoxification. The chain is Cytochrome P450 monooxygenase 226 from Postia placenta (strain ATCC 44394 / Madison 698-R) (Brown rot fungus).